The primary structure comprises 61 residues: Protein DDR2 (61 aa).

The N-terminal stretch at 1-22 (MKVSQVFISAISVFGLATSVNA) is a signal peptide. N-linked (GlcNAc...) asparagine glycans are attached at residues N24 and N27.

This sequence to yeast HOR7.

Functionally, may play an important role in the response of cells to diverse environmental stresses. This chain is Protein DDR2 (DDR2), found in Saccharomyces cerevisiae (strain ATCC 204508 / S288c) (Baker's yeast).